Consider the following 298-residue polypeptide: 4-diphosphocytidyl-2-C-methyl-D-erythritol kinase (298 aa).

Lysine 15 is a catalytic residue. 102–112 serves as a coordination point for ATP; the sequence is PVAAGIGGGSS. Aspartate 142 is a catalytic residue.

The protein belongs to the GHMP kinase family. IspE subfamily.

It catalyses the reaction 4-CDP-2-C-methyl-D-erythritol + ATP = 4-CDP-2-C-methyl-D-erythritol 2-phosphate + ADP + H(+). The protein operates within isoprenoid biosynthesis; isopentenyl diphosphate biosynthesis via DXP pathway; isopentenyl diphosphate from 1-deoxy-D-xylulose 5-phosphate: step 3/6. Its function is as follows. Catalyzes the phosphorylation of the position 2 hydroxy group of 4-diphosphocytidyl-2C-methyl-D-erythritol. This chain is 4-diphosphocytidyl-2-C-methyl-D-erythritol kinase, found in Hyphomonas neptunium (strain ATCC 15444).